We begin with the raw amino-acid sequence, 194 residues long: Probable GTP-binding protein EngB (194 aa).

Positions 22–194 (DLPEYALAGR…AWQFIKEGME (173 aa)) constitute an EngB-type G domain. Residues 30-37 (GRSNVGKS), 57-61 (GKTQT), 75-78 (DVPG), 142-145 (TKAD), and 174-176 (FSS) each bind GTP. The Mg(2+) site is built by serine 37 and threonine 59.

The protein belongs to the TRAFAC class TrmE-Era-EngA-EngB-Septin-like GTPase superfamily. EngB GTPase family. Requires Mg(2+) as cofactor.

Its function is as follows. Necessary for normal cell division and for the maintenance of normal septation. The polypeptide is Probable GTP-binding protein EngB (Listeria welshimeri serovar 6b (strain ATCC 35897 / DSM 20650 / CCUG 15529 / CIP 8149 / NCTC 11857 / SLCC 5334 / V8)).